Consider the following 587-residue polypeptide: Glutamine--tRNA ligase (587 aa).

Positions 58-68 (PEPNGYLHIGH) match the 'HIGH' region motif. Residues 59–61 (EPN) and 65–71 (HIGHAKS) each bind ATP. The L-glutamine site is built by aspartate 91 and tyrosine 240. ATP is bound by residues threonine 259 and 294–295 (RL). The 'KMSKS' region signature appears at 301 to 305 (VTSKR).

This sequence belongs to the class-I aminoacyl-tRNA synthetase family. As to quaternary structure, monomer.

It localises to the cytoplasm. The enzyme catalyses tRNA(Gln) + L-glutamine + ATP = L-glutaminyl-tRNA(Gln) + AMP + diphosphate. The protein is Glutamine--tRNA ligase of Bordetella parapertussis (strain 12822 / ATCC BAA-587 / NCTC 13253).